A 100-amino-acid chain; its full sequence is Urease subunit gamma (100 aa).

This sequence belongs to the urease gamma subunit family. In terms of assembly, heterotrimer of UreA (gamma), UreB (beta) and UreC (alpha) subunits. Three heterotrimers associate to form the active enzyme.

It localises to the cytoplasm. It carries out the reaction urea + 2 H2O + H(+) = hydrogencarbonate + 2 NH4(+). The protein operates within nitrogen metabolism; urea degradation; CO(2) and NH(3) from urea (urease route): step 1/1. The polypeptide is Urease subunit gamma (Paracidovorax citrulli (strain AAC00-1) (Acidovorax citrulli)).